Here is a 651-residue protein sequence, read N- to C-terminus: Threonine--tRNA ligase (651 aa).

The TGS domain maps to 1–61 (MIKITFPDNS…NDDATVKLLK (61 aa)). Residues 242–541 (DHRKIGKEMD…LIEHTAGKFP (300 aa)) form a catalytic region. Zn(2+)-binding residues include Cys-337, His-388, and His-518.

The protein belongs to the class-II aminoacyl-tRNA synthetase family. As to quaternary structure, homodimer. Zn(2+) serves as cofactor.

It localises to the cytoplasm. The catalysed reaction is tRNA(Thr) + L-threonine + ATP = L-threonyl-tRNA(Thr) + AMP + diphosphate + H(+). Its function is as follows. Catalyzes the attachment of threonine to tRNA(Thr) in a two-step reaction: L-threonine is first activated by ATP to form Thr-AMP and then transferred to the acceptor end of tRNA(Thr). Also edits incorrectly charged L-seryl-tRNA(Thr). The polypeptide is Threonine--tRNA ligase (Parabacteroides distasonis (strain ATCC 8503 / DSM 20701 / CIP 104284 / JCM 5825 / NCTC 11152)).